Consider the following 429-residue polypeptide: C4-dicarboxylate transport protein (429 aa).

A run of 8 helical transmembrane segments spans residues 9–29 (VLYVQVIFAIIVGVILGHFYP), 45–65 (LIKMVIGPIIFCTVVTGIAGM), 79–99 (LLYFEVVSTFALLLGLAATHI), 149–169 (GEILQILLIALLFGSVLAHLG), 185–205 (VLFGIVHIVTKLAPIGAFGAM), 223–243 (LIGTFYLTSIVFVLVVLGTIA), 308–328 (IYMTMAVLFIAQATNIELTWM), and 356–376 (AATLAVVPTIPLSGMVLILGI).

It belongs to the dicarboxylate/amino acid:cation symporter (DAACS) (TC 2.A.23) family.

Its subcellular location is the cell inner membrane. Responsible for the transport of dicarboxylates such as succinate, fumarate, and malate from the periplasm across the membrane. This Burkholderia ambifaria (strain MC40-6) protein is C4-dicarboxylate transport protein.